Reading from the N-terminus, the 106-residue chain is MGKTNDWLDFDQLVEDSVRDALKPPSMYKVILVNDDYTPMEFVIDVLQKFFSYDVERATQLMLAVHYQGKAICGVFTAEVAETKVAMVNKYARENEHPLLCTLEKA.

It belongs to the ClpS family. In terms of assembly, binds to the N-terminal domain of the chaperone ClpA.

Involved in the modulation of the specificity of the ClpAP-mediated ATP-dependent protein degradation. This chain is ATP-dependent Clp protease adapter protein ClpS, found in Salmonella agona (strain SL483).